The chain runs to 194 residues: Nucleoside triphosphate pyrophosphatase (194 aa).

The active-site Proton acceptor is Asp-71.

Belongs to the Maf family. A divalent metal cation serves as cofactor.

The protein localises to the cytoplasm. It catalyses the reaction a ribonucleoside 5'-triphosphate + H2O = a ribonucleoside 5'-phosphate + diphosphate + H(+). The catalysed reaction is a 2'-deoxyribonucleoside 5'-triphosphate + H2O = a 2'-deoxyribonucleoside 5'-phosphate + diphosphate + H(+). Its function is as follows. Nucleoside triphosphate pyrophosphatase. May have a dual role in cell division arrest and in preventing the incorporation of modified nucleotides into cellular nucleic acids. This is Nucleoside triphosphate pyrophosphatase from Paramagnetospirillum magneticum (strain ATCC 700264 / AMB-1) (Magnetospirillum magneticum).